The primary structure comprises 481 residues: Ankyrin repeat, SAM and basic leucine zipper domain-containing protein 1 (481 aa).

Over residues 1–10 (MASGALRGLA) the composition is skewed to low complexity. Residues 1–23 (MASGALRGLAVAGGGESSDSEDD) are disordered. Residues S17, S18, and S20 each carry the phosphoserine modification. ANK repeat units lie at residues 45 to 74 (EKSE…SVDS), 78 to 107 (YGWT…NASF), 110 to 144 (DKQT…DPNI), 148 to 177 (RLMT…EVNA), 181 to 210 (NGYT…NKML), and 214 to 243 (DGKI…PLEG). One can recognise an SAM domain in the interval 272–334 (SYTAFGDLEI…KILSALKELE (63 aa)).

As to quaternary structure, interacts with DDX4, PIWIL1, RANBP9 and TDRD1.

The protein resides in the cytoplasm. Its function is as follows. Plays a central role during spermatogenesis by repressing transposable elements and preventing their mobilization, which is essential for the germline integrity. Acts via the piRNA metabolic process, which mediates the repression of transposable elements during meiosis by forming complexes composed of piRNAs and Piwi proteins and governs the methylation and subsequent repression of transposons. Its association with pi-bodies suggests a participation in the primary piRNAs metabolic process. Required prior to the pachytene stage to facilitate the production of multiple types of piRNAs, including those associated with repeats involved in the regulation of retrotransposons. May act by mediating protein-protein interactions during germ cell maturation. This chain is Ankyrin repeat, SAM and basic leucine zipper domain-containing protein 1 (ASZ1), found in Eulemur macaco macaco (Black lemur).